Reading from the N-terminus, the 359-residue chain is Peptide chain release factor 1 (359 aa).

N5-methylglutamine is present on Gln236.

The protein belongs to the prokaryotic/mitochondrial release factor family. Methylated by PrmC. Methylation increases the termination efficiency of RF1.

It is found in the cytoplasm. Peptide chain release factor 1 directs the termination of translation in response to the peptide chain termination codons UAG and UAA. The protein is Peptide chain release factor 1 of Streptococcus pneumoniae serotype 19F (strain G54).